Here is a 182-residue protein sequence, read N- to C-terminus: Ribosome-recycling factor (182 aa).

Belongs to the RRF family.

The protein resides in the cytoplasm. In terms of biological role, responsible for the release of ribosomes from messenger RNA at the termination of protein biosynthesis. May increase the efficiency of translation by recycling ribosomes from one round of translation to another. The sequence is that of Ribosome-recycling factor from Prochlorococcus marinus subsp. pastoris (strain CCMP1986 / NIES-2087 / MED4).